The following is a 361-amino-acid chain: Phospho-N-acetylmuramoyl-pentapeptide-transferase (361 aa).

10 consecutive transmembrane segments (helical) span residues 25-45, 72-92, 95-115, 133-153, 169-189, 200-220, 240-260, 264-284, 289-309, and 338-358; these read TGGAVVTGALFVFLCGPWIIN, TPTMGGLMILSGLTVGTVLWA, VNPYVWIVLAVTLGFGFVGFY, TRLLIEFAIAGAACFALVWLG, VVLNLGWYFVIFGAFVIVGAG, GLAIVPVMIAAASFGLIAYLA, LAVLCGALLGAGLGFLWFNAP, IFMGDTGSLALGGMLGSIAVA, IVLAVIGGLFVLEAVSVIVQV, and QIVIRFWIIAVMLALAGLATL.

It belongs to the glycosyltransferase 4 family. MraY subfamily. The cofactor is Mg(2+).

It localises to the cell inner membrane. It carries out the reaction UDP-N-acetyl-alpha-D-muramoyl-L-alanyl-gamma-D-glutamyl-meso-2,6-diaminopimeloyl-D-alanyl-D-alanine + di-trans,octa-cis-undecaprenyl phosphate = di-trans,octa-cis-undecaprenyl diphospho-N-acetyl-alpha-D-muramoyl-L-alanyl-D-glutamyl-meso-2,6-diaminopimeloyl-D-alanyl-D-alanine + UMP. It participates in cell wall biogenesis; peptidoglycan biosynthesis. Functionally, catalyzes the initial step of the lipid cycle reactions in the biosynthesis of the cell wall peptidoglycan: transfers peptidoglycan precursor phospho-MurNAc-pentapeptide from UDP-MurNAc-pentapeptide onto the lipid carrier undecaprenyl phosphate, yielding undecaprenyl-pyrophosphoryl-MurNAc-pentapeptide, known as lipid I. The sequence is that of Phospho-N-acetylmuramoyl-pentapeptide-transferase from Rhodopseudomonas palustris (strain BisB5).